The primary structure comprises 343 residues: 4-hydroxy-3-methylbut-2-enyl diphosphate reductase (343 aa).

Cys-18 serves as a coordination point for [4Fe-4S] cluster. His-47 and His-83 together coordinate (2E)-4-hydroxy-3-methylbut-2-enyl diphosphate. The dimethylallyl diphosphate site is built by His-47 and His-83. Residues His-47 and His-83 each contribute to the isopentenyl diphosphate site. Cys-105 provides a ligand contact to [4Fe-4S] cluster. His-133 contacts (2E)-4-hydroxy-3-methylbut-2-enyl diphosphate. Position 133 (His-133) interacts with dimethylallyl diphosphate. His-133 is a binding site for isopentenyl diphosphate. Glu-135 (proton donor) is an active-site residue. Residue Thr-174 participates in (2E)-4-hydroxy-3-methylbut-2-enyl diphosphate binding. Cys-204 provides a ligand contact to [4Fe-4S] cluster. (2E)-4-hydroxy-3-methylbut-2-enyl diphosphate is bound by residues Ser-232, Ser-233, Asn-234, and Ser-277. Dimethylallyl diphosphate is bound by residues Ser-232, Ser-233, Asn-234, and Ser-277. Isopentenyl diphosphate-binding residues include Ser-232, Ser-233, Asn-234, and Ser-277.

It belongs to the IspH family. It depends on [4Fe-4S] cluster as a cofactor.

The enzyme catalyses isopentenyl diphosphate + 2 oxidized [2Fe-2S]-[ferredoxin] + H2O = (2E)-4-hydroxy-3-methylbut-2-enyl diphosphate + 2 reduced [2Fe-2S]-[ferredoxin] + 2 H(+). It carries out the reaction dimethylallyl diphosphate + 2 oxidized [2Fe-2S]-[ferredoxin] + H2O = (2E)-4-hydroxy-3-methylbut-2-enyl diphosphate + 2 reduced [2Fe-2S]-[ferredoxin] + 2 H(+). It functions in the pathway isoprenoid biosynthesis; dimethylallyl diphosphate biosynthesis; dimethylallyl diphosphate from (2E)-4-hydroxy-3-methylbutenyl diphosphate: step 1/1. The protein operates within isoprenoid biosynthesis; isopentenyl diphosphate biosynthesis via DXP pathway; isopentenyl diphosphate from 1-deoxy-D-xylulose 5-phosphate: step 6/6. In terms of biological role, catalyzes the conversion of 1-hydroxy-2-methyl-2-(E)-butenyl 4-diphosphate (HMBPP) into a mixture of isopentenyl diphosphate (IPP) and dimethylallyl diphosphate (DMAPP). Acts in the terminal step of the DOXP/MEP pathway for isoprenoid precursor biosynthesis. This is 4-hydroxy-3-methylbut-2-enyl diphosphate reductase from Bartonella henselae (strain ATCC 49882 / DSM 28221 / CCUG 30454 / Houston 1) (Rochalimaea henselae).